A 1140-amino-acid polypeptide reads, in one-letter code: MGSSGSKSTTATTTSHSSTTTTSSTTSTTTPTTTSTTSTTSTKVTTSPEIIVSSSSTLVSSVVPEFTSSSSLSSDTIASILSSESLVSIFSSLSYTSSDISSTSVNDVESSTSGPSNSYSALSSTNAQLSSSTTETDSISSSAIQTSSPQTSSSNGGGSSSEPLGKSSVLETTASSSDTTAVTSSTFTTLTDVSSSPKISSSGSAVTSVGTTSDASKEVFSSSTSDVSSLLSSTSSPASSTISETLPFSSTILSITSSPVSSEAPSATSSVISSEASWATSSSVSSEAPLATSSVVSSEAPSSTSSVVSSEAPSSTSSSVSSEISSTTSSSVSSEAPLATSSVVSSEAPSSTSSSVSSEISSTTSSSVSSEAPLATSSVVSSEAPSSTSSSVSSEAPSSTSSSVSSEAPSSTSSSVSSEISSTKSSVMSSEVSSATSSLVSSEAPSAISSLASSRLFSSKNTSVTSTLVATEASSVTSSLRPSSETLASNSIIESSLSTGYNSTVSTTTSAASSTLGSKVSSSNSRMATSKTSSTSSDLSKSSVIFGNSSTVTTSPSASISLTASPLPSVWSDITSSEASSISSNLASSSAPSDNNSTIASASLIVTKTKNSVVSSIVSSITSSETTNESNLATSSTSLLSNKATARSLSTSNATSASNVPTGTFSSMSSHTSVITPGFSTSSASLAINSTVVSSSLAGYSFSTPESSPTTSTLVTSEAPSTVSSMTTSAPFINNSTSARPSPSTASFITESTSSISSVPLASGDVTSSLAAHNLTTFSAPSTSSAQLVSKSTTSSSILVTPRIDRSGNSSTASRIATSLPNKTTFVSSLSSTSAHARNIFNSTVLATAKQIETLTSTVNCSNPTPNYNITKTVIVSRETTAIGTVTSCSGGCTKNRKSTTLITITDIDASTVTTCPEKEVTSTTSGDEAEHTTSTKISNFETSTFSESFKDMKTSQETKKAKPGSETVRSSSSFVEKTSPTTKASPSTSPSESKAAGNTSVATNASPSTSPSESQGTGSTSVEGAKSKSTKNSEGVSTTKAKNTSTVAKSSTESPIGRGETTLETIIVSSQKSLLTSQLSSSTEKVNRSTTKPTAAIHGTSSSAKQSTTYTVSTAKENTGASLNINMKAFVIGAIALVA.

Disordered stretches follow at residues 1-49 (MGSS…TSPE), 97-243 (SSDI…STIS), 280-427 (TSSS…KSSV), 512-541 (ASST…DLSK), 702-747 (FSTP…STAS), 916-1059 (CPEK…PIGR), and 1080-1103 (LSSS…GTSS). Positions 105-129 (VNDVESSTSGPSNSYSALSSTNAQL) are enriched in polar residues. Low complexity-rich tracts occupy residues 130-154 (SSST…TSSS), 172-214 (TTAS…TTSD), and 221-243 (SSST…STIS). Residues 516–528 (LGSKVSSSNSRMA) are compositionally biased toward polar residues. Low complexity-rich tracts occupy residues 529–541 (TSKT…DLSK) and 703–718 (STPE…VTSE). Residues 719–733 (APSTVSSMTTSAPFI) show a composition bias toward polar residues. Over residues 734 to 747 (NNSTSARPSPSTAS) the composition is skewed to low complexity. Positions 949–961 (SFKDMKTSQETKK) are enriched in basic and acidic residues. Residues 977–997 (EKTSPTTKASPSTSPSESKAA) are compositionally biased toward low complexity. Composition is skewed to polar residues over residues 998-1023 (GNTS…STSV), 1031-1055 (TKNS…STES), and 1089-1103 (RSTT…GTSS).

This is an uncharacterized protein from Saccharomyces cerevisiae (strain ATCC 204508 / S288c) (Baker's yeast).